The following is a 182-amino-acid chain: Plasmolipin (182 aa).

The tract at residues 1-20 (MAEFPSKVSTRTSSPAQGVG) is disordered. The Cytoplasmic portion of the chain corresponds to 1-35 (MAEFPSKVSTRTSSPAQGVGASVSAMRPDLGFVRS). Positions 7 to 16 (KVSTRTSSPA) are enriched in polar residues. Position 9 is a phosphoserine (Ser9). The MARVEL domain maps to 32 to 166 (FVRSALGVLA…SAFFSFQAWR (135 aa)). The chain crosses the membrane as a helical span at residues 36-56 (ALGVLALLQLVLGLLVWALIA). The Extracellular portion of the chain corresponds to 57–68 (DTPYHLYPAYGW). The helical transmembrane segment at 69–89 (VMFVAVFLWLVTIVFFIIYLF) threads the bilayer. Topologically, residues 90 to 99 (QLHMKLYMVP) are cytoplasmic. Residues 100 to 120 (WPLVLLVFFVAATVLYITAFV) traverse the membrane as a helical segment. Topologically, residues 121 to 141 (ACAAAVDLTSLRGSRPYNQRS) are extracellular. The helical transmembrane segment at 142 to 162 (AASFFACLVMIAYGLSAFFSF) threads the bilayer. Over 163-182 (QAWRGVGSNAATSQMAGGYS) the chain is Cytoplasmic.

The protein belongs to the MAL family. As to quaternary structure, forms oligomers. Post-translationally, phosphorylated. As to expression, detected to the sciatic nerve, brain and kidney. In the sciatic nerve, found in Schwann cells; in the brain, in developing oligodendrocytes, especially of the corpus callosum, of cortical white matter, in the optic nerve and in the stratum radiatum and stratum oriens of the hippocampus. In kidney, segregated to the apical surface of renal tubular epithelia.

Its subcellular location is the cell membrane. It is found in the myelin membrane. It localises to the apical cell membrane. In terms of biological role, main component of the myelin sheath that plays an important role in myelin membrane biogenesis and myelination. Plays an essential function in apical endocytosis. Regulates epithelial development through the regulation of apical endocytosis. Part of the intracellular machinery that mediates basolateral-to-apical transport of ICAM-1, an essential adhesion receptor in epithelial cells, from the subapical compartment in hepatic epithelial cells. The chain is Plasmolipin (Pllp) from Rattus norvegicus (Rat).